A 502-amino-acid polypeptide reads, in one-letter code: Glucose-6-phosphate isomerase (502 aa).

Glu331 (proton donor) is an active-site residue. Active-site residues include His362 and Lys471.

The protein belongs to the GPI family.

The protein localises to the cytoplasm. The catalysed reaction is alpha-D-glucose 6-phosphate = beta-D-fructose 6-phosphate. Its pathway is carbohydrate biosynthesis; gluconeogenesis. It participates in carbohydrate degradation; glycolysis; D-glyceraldehyde 3-phosphate and glycerone phosphate from D-glucose: step 2/4. In terms of biological role, catalyzes the reversible isomerization of glucose-6-phosphate to fructose-6-phosphate. This is Glucose-6-phosphate isomerase from Xylella fastidiosa (strain 9a5c).